Here is a 433-residue protein sequence, read N- to C-terminus: Dihydroorotase (433 aa).

Residues histidine 63 and histidine 65 each coordinate Zn(2+). Substrate contacts are provided by residues 65-67 (HLR) and asparagine 97. 3 residues coordinate Zn(2+): aspartate 155, histidine 182, and histidine 235. Asparagine 283 lines the substrate pocket. A Zn(2+)-binding site is contributed by aspartate 310. Aspartate 310 is a catalytic residue. Substrate is bound at residue histidine 314.

The protein belongs to the metallo-dependent hydrolases superfamily. DHOase family. Class I DHOase subfamily. It depends on Zn(2+) as a cofactor.

It carries out the reaction (S)-dihydroorotate + H2O = N-carbamoyl-L-aspartate + H(+). The protein operates within pyrimidine metabolism; UMP biosynthesis via de novo pathway; (S)-dihydroorotate from bicarbonate: step 3/3. Its function is as follows. Catalyzes the reversible cyclization of carbamoyl aspartate to dihydroorotate. The protein is Dihydroorotase of Anaeromyxobacter sp. (strain K).